Here is a 137-residue protein sequence, read N- to C-terminus: MIAVKKDKINGDALGTGRRKSSVARVRVRPGSGKITINGKSIEEYFVNDQHRYAITETLEAAGLTESVDLLIRVSGGGMTGQAGAVRMGLARALCSHDEALHDPMREGSFLTRDSRMKERKKPGLRGARRGVQFSKR.

The tract at residues 114–137 (DSRMKERKKPGLRGARRGVQFSKR) is disordered. Residues 118 to 137 (KERKKPGLRGARRGVQFSKR) show a composition bias toward basic residues.

This sequence belongs to the universal ribosomal protein uS9 family.

The sequence is that of Small ribosomal subunit protein uS9 from Rhodopirellula baltica (strain DSM 10527 / NCIMB 13988 / SH1).